The primary structure comprises 81 residues: ATP synthase subunit c, chloroplastic (81 aa).

2 helical membrane-spanning segments follow: residues 3–23 (PLISAASVIAAGLAVGLASIG) and 57–77 (LAFMEALTIYGLVVALALLFA).

It belongs to the ATPase C chain family. In terms of assembly, F-type ATPases have 2 components, F(1) - the catalytic core - and F(0) - the membrane proton channel. F(1) has five subunits: alpha(3), beta(3), gamma(1), delta(1), epsilon(1). F(0) has four main subunits: a(1), b(1), b'(1) and c(10-14). The alpha and beta chains form an alternating ring which encloses part of the gamma chain. F(1) is attached to F(0) by a central stalk formed by the gamma and epsilon chains, while a peripheral stalk is formed by the delta, b and b' chains.

The protein resides in the plastid. It is found in the chloroplast thylakoid membrane. In terms of biological role, f(1)F(0) ATP synthase produces ATP from ADP in the presence of a proton or sodium gradient. F-type ATPases consist of two structural domains, F(1) containing the extramembraneous catalytic core and F(0) containing the membrane proton channel, linked together by a central stalk and a peripheral stalk. During catalysis, ATP synthesis in the catalytic domain of F(1) is coupled via a rotary mechanism of the central stalk subunits to proton translocation. Key component of the F(0) channel; it plays a direct role in translocation across the membrane. A homomeric c-ring of between 10-14 subunits forms the central stalk rotor element with the F(1) delta and epsilon subunits. The protein is ATP synthase subunit c, chloroplastic of Ipomoea purpurea (Common morning glory).